The primary structure comprises 479 residues: Aspartyl/glutamyl-tRNA(Asn/Gln) amidotransferase subunit B (479 aa).

This sequence belongs to the GatB/GatE family. GatB subfamily. As to quaternary structure, heterotrimer of A, B and C subunits.

It catalyses the reaction L-glutamyl-tRNA(Gln) + L-glutamine + ATP + H2O = L-glutaminyl-tRNA(Gln) + L-glutamate + ADP + phosphate + H(+). It carries out the reaction L-aspartyl-tRNA(Asn) + L-glutamine + ATP + H2O = L-asparaginyl-tRNA(Asn) + L-glutamate + ADP + phosphate + 2 H(+). Its function is as follows. Allows the formation of correctly charged Asn-tRNA(Asn) or Gln-tRNA(Gln) through the transamidation of misacylated Asp-tRNA(Asn) or Glu-tRNA(Gln) in organisms which lack either or both of asparaginyl-tRNA or glutaminyl-tRNA synthetases. The reaction takes place in the presence of glutamine and ATP through an activated phospho-Asp-tRNA(Asn) or phospho-Glu-tRNA(Gln). The protein is Aspartyl/glutamyl-tRNA(Asn/Gln) amidotransferase subunit B of Deinococcus radiodurans (strain ATCC 13939 / DSM 20539 / JCM 16871 / CCUG 27074 / LMG 4051 / NBRC 15346 / NCIMB 9279 / VKM B-1422 / R1).